The chain runs to 78 residues: Acyl carrier protein (78 aa).

In terms of domain architecture, Carrier spans 2–77 (SEIASRVKAI…DAVAYIEEHA (76 aa)). Position 37 is an O-(pantetheine 4'-phosphoryl)serine (S37).

This sequence belongs to the acyl carrier protein (ACP) family. In terms of processing, 4'-phosphopantetheine is transferred from CoA to a specific serine of apo-ACP by AcpS. This modification is essential for activity because fatty acids are bound in thioester linkage to the sulfhydryl of the prosthetic group.

Its subcellular location is the cytoplasm. The protein operates within lipid metabolism; fatty acid biosynthesis. Carrier of the growing fatty acid chain in fatty acid biosynthesis. The chain is Acyl carrier protein from Bacteroides fragilis (strain ATCC 25285 / DSM 2151 / CCUG 4856 / JCM 11019 / LMG 10263 / NCTC 9343 / Onslow / VPI 2553 / EN-2).